Consider the following 328-residue polypeptide: GMP reductase (328 aa).

The active-site Thioimidate intermediate is the Cys176. Position 205 to 228 (205 to 228) interacts with NADP(+); that stretch reads IIADGGIRTHGDVAKSIRFGATMV.

Belongs to the IMPDH/GMPR family. GuaC type 2 subfamily.

It carries out the reaction IMP + NH4(+) + NADP(+) = GMP + NADPH + 2 H(+). Functionally, catalyzes the irreversible NADPH-dependent deamination of GMP to IMP. It functions in the conversion of nucleobase, nucleoside and nucleotide derivatives of G to A nucleotides, and in maintaining the intracellular balance of A and G nucleotides. The chain is GMP reductase from Bacillus cereus (strain ATCC 14579 / DSM 31 / CCUG 7414 / JCM 2152 / NBRC 15305 / NCIMB 9373 / NCTC 2599 / NRRL B-3711).